The following is a 507-amino-acid chain: ATP synthase subunit alpha, plastid (507 aa).

170 to 177 (GDRQTGKT) serves as a coordination point for ATP.

Belongs to the ATPase alpha/beta chains family. F-type ATPases have 2 components, CF(1) - the catalytic core - and CF(0) - the membrane proton channel. CF(1) has five subunits: alpha(3), beta(3), gamma(1), delta(1), epsilon(1). CF(0) has four main subunits: a, b, b' and c.

Its subcellular location is the plastid membrane. It catalyses the reaction ATP + H2O + 4 H(+)(in) = ADP + phosphate + 5 H(+)(out). In terms of biological role, produces ATP from ADP in the presence of a proton gradient across the membrane. The alpha chain is a regulatory subunit. This Cuscuta obtusiflora (Peruvian dodder) protein is ATP synthase subunit alpha, plastid.